A 963-amino-acid polypeptide reads, in one-letter code: Non-ribosomal peptide synthetase CmlP (963 aa).

The Carrier domain maps to 492–568 (GEDAAELRRV…AAFLRHLRGE (77 aa)). At S526 the chain carries O-(pantetheine 4'-phosphoryl)serine. The disordered stretch occupies residues 928 to 963 (GRLLGTPPDTPAGDRPERTGTTAEAQNGAAHAPTPR).

Belongs to the ATP-dependent AMP-binding enzyme family. Requires pantetheine 4'-phosphate as cofactor.

It carries out the reaction 4-amino-L-phenylalanine + holo-[peptidyl-carrier protein] + ATP = 4-amino-L-phenylalanyl-[peptidyl-carrier protein] + AMP + diphosphate. It functions in the pathway antibiotic biosynthesis. Involved in chloramphenicol biosynthesis. Activates 4-amino-L-phenylalanine by adenylation and loads it onto its peptidyl carrier domain, via a thioester linkage to the phosphopanthetheine moiety. Can also adenylate tyrosine and phenylalanine at low rates, but not L-p-nitrophenylalanine or threo-phenylserine. This is Non-ribosomal peptide synthetase CmlP from Streptomyces venezuelae (strain ATCC 10712 / CBS 650.69 / DSM 40230 / JCM 4526 / NBRC 13096 / PD 04745).